The sequence spans 196 residues: UPF0316 protein LBL_2483 (196 aa).

A run of 3 helical transmembrane segments spans residues 12 to 32 (YCVL…IGTI), 44 to 64 (IAAS…TQVI), and 70 to 90 (ALCY…GMIL).

It belongs to the UPF0316 family.

It localises to the cell membrane. This Leptospira borgpetersenii serovar Hardjo-bovis (strain L550) protein is UPF0316 protein LBL_2483.